Consider the following 137-residue polypeptide: CUB domain-containing protein (137 aa).

Residues 1 to 21 (MRLSRAFAWPLLCSIATTVKA) form the signal peptide. Cystine bridges form between cysteine 30-cysteine 51 and cysteine 75-cysteine 96. Residues 30 to 132 (CGGHYTDEYG…TFFEIYYFVD (103 aa)) enclose the CUB domain.

The sequence is that of CUB domain-containing protein from Homo sapiens (Human).